Reading from the N-terminus, the 28-residue chain is uncharacterized protein (28 aa).

This is an uncharacterized protein from Archaeoglobus fulgidus (strain ATCC 49558 / DSM 4304 / JCM 9628 / NBRC 100126 / VC-16).